A 305-amino-acid chain; its full sequence is Taste receptor type 2 member 136 (305 aa).

The Extracellular portion of the chain corresponds to 1 to 9 (MMSFLVSIA). A helical membrane pass occupies residues 10-30 (SIAMLVKIVLGTFANVFIVLV). Topologically, residues 31–46 (NFTDCIKKRKFLLADR) are cytoplasmic. A helical membrane pass occupies residues 47 to 67 (ILTVLAIFRFDLLWIILMNWS). At 68 to 69 (SS) the chain is on the extracellular side. The helical transmembrane segment at 70–90 (VFHVGLYFQVRFCICVVWIVT) threads the bilayer. The Cytoplasmic portion of the chain corresponds to 91-99 (NHFNTWLAN). Residues 100-120 (ILSILYLLKIDNFSNLIFLGL) form a helical membrane-spanning segment. Over 121–127 (KGKIKCP) the chain is Extracellular. The helical transmembrane segment at 128–148 (YIVLLPCFVLLFPNLIMVTIC) threads the bilayer. Topologically, residues 149–176 (ETTQANGHQGNLTGKTKLTYFTNLIAMT) are cytoplasmic. A helical membrane pass occupies residues 177–197 (FTLGSLVPFTTFMICFLLLIC). The Extracellular segment spans residues 198–223 (SLCKHLRTMRLYGKGSQGPSASTHIK). Residues 224 to 244 (VLQVLISFLLLFSMFILLLII) traverse the membrane as a helical segment. At 245-305 (SDYNYTKSLE…ARFWLKEKKP (61 aa)) the chain is on the cytoplasmic side.

The protein belongs to the G-protein coupled receptor T2R family.

It is found in the membrane. Putative taste receptor which may play a role in the perception of bitterness. The polypeptide is Taste receptor type 2 member 136 (Tas2r136) (Mus musculus (Mouse)).